The primary structure comprises 195 residues: Imidazoleglycerol-phosphate dehydratase (195 aa).

Belongs to the imidazoleglycerol-phosphate dehydratase family.

The protein resides in the cytoplasm. It carries out the reaction D-erythro-1-(imidazol-4-yl)glycerol 3-phosphate = 3-(imidazol-4-yl)-2-oxopropyl phosphate + H2O. The protein operates within amino-acid biosynthesis; L-histidine biosynthesis; L-histidine from 5-phospho-alpha-D-ribose 1-diphosphate: step 6/9. The sequence is that of Imidazoleglycerol-phosphate dehydratase from Campylobacter concisus (strain 13826).